The chain runs to 642 residues: Extracellular metalloproteinase 4 (642 aa).

An N-terminal signal peptide occupies residues 1 to 18 (MHGLLLAGLLALPLNVLA). Positions 19–253 (HPTESHSSGI…VHSVVDYVSA (235 aa)) are excised as a propeptide. Positions 49–60 (SDSLTGQDGQSF) are enriched in polar residues. Residues 49-72 (SDSLTGQDGQSFTASSADADTSSG) are disordered. Over residues 61 to 71 (TASSADADTSS) the composition is skewed to low complexity. N-linked (GlcNAc...) asparagine glycosylation is present at Asn-419. His-436 is a binding site for Zn(2+). Residue Glu-437 is part of the active site. Residue His-440 coordinates Zn(2+). N-linked (GlcNAc...) asparagine glycans are attached at residues Asn-509 and Asn-602.

The protein belongs to the peptidase M36 family. Requires Zn(2+) as cofactor.

The protein localises to the secreted. Functionally, secreted metalloproteinase that allows assimilation of proteinaceous substrates and probably acts as a virulence factor. This is Extracellular metalloproteinase 4 (MEP4) from Arthroderma gypseum (strain ATCC MYA-4604 / CBS 118893) (Microsporum gypseum).